Consider the following 361-residue polypeptide: Phospho-N-acetylmuramoyl-pentapeptide-transferase (361 aa).

The next 10 membrane-spanning stretches (helical) occupy residues Gly-27–Leu-47, Thr-72–Ala-92, Val-99–Leu-119, Leu-135–Ala-155, Ala-169–Gly-189, Gly-200–Val-220, Leu-240–Pro-260, Ile-264–Ala-284, Ile-289–Val-309, and Gln-338–Leu-358.

This sequence belongs to the glycosyltransferase 4 family. MraY subfamily. The cofactor is Mg(2+).

It is found in the cell inner membrane. It carries out the reaction UDP-N-acetyl-alpha-D-muramoyl-L-alanyl-gamma-D-glutamyl-meso-2,6-diaminopimeloyl-D-alanyl-D-alanine + di-trans,octa-cis-undecaprenyl phosphate = di-trans,octa-cis-undecaprenyl diphospho-N-acetyl-alpha-D-muramoyl-L-alanyl-D-glutamyl-meso-2,6-diaminopimeloyl-D-alanyl-D-alanine + UMP. The protein operates within cell wall biogenesis; peptidoglycan biosynthesis. Its function is as follows. Catalyzes the initial step of the lipid cycle reactions in the biosynthesis of the cell wall peptidoglycan: transfers peptidoglycan precursor phospho-MurNAc-pentapeptide from UDP-MurNAc-pentapeptide onto the lipid carrier undecaprenyl phosphate, yielding undecaprenyl-pyrophosphoryl-MurNAc-pentapeptide, known as lipid I. This chain is Phospho-N-acetylmuramoyl-pentapeptide-transferase, found in Methylobacterium radiotolerans (strain ATCC 27329 / DSM 1819 / JCM 2831 / NBRC 15690 / NCIMB 10815 / 0-1).